A 262-amino-acid chain; its full sequence is Indole-3-glycerol phosphate synthase (262 aa).

The protein belongs to the TrpC family.

It carries out the reaction 1-(2-carboxyphenylamino)-1-deoxy-D-ribulose 5-phosphate + H(+) = (1S,2R)-1-C-(indol-3-yl)glycerol 3-phosphate + CO2 + H2O. Its pathway is amino-acid biosynthesis; L-tryptophan biosynthesis; L-tryptophan from chorismate: step 4/5. This chain is Indole-3-glycerol phosphate synthase, found in Dechloromonas aromatica (strain RCB).